Here is a 1298-residue protein sequence, read N- to C-terminus: Phosphoribosylformylglycinamidine synthase (1298 aa).

The segment at 303–327 (FPGAATGSGGEIRDEGATGRGAKPK) is disordered. ATP-binding positions include 305–316 (GAATGSGGEIRD), 384–386 (TGY), and alanine 676. Residues aspartate 677, glutamate 716, asparagine 720, and aspartate 884 each contribute to the Mg(2+) site. Serine 886 contacts ATP. Residues 1045 to 1298 (VAVLREQGVN…MFRNARAWVN (254 aa)) enclose the Glutamine amidotransferase type-1 domain. The active-site Nucleophile is the cysteine 1138. Catalysis depends on residues histidine 1263 and glutamate 1265.

It in the N-terminal section; belongs to the FGAMS family. In terms of assembly, monomer.

The protein localises to the cytoplasm. It catalyses the reaction N(2)-formyl-N(1)-(5-phospho-beta-D-ribosyl)glycinamide + L-glutamine + ATP + H2O = 2-formamido-N(1)-(5-O-phospho-beta-D-ribosyl)acetamidine + L-glutamate + ADP + phosphate + H(+). It functions in the pathway purine metabolism; IMP biosynthesis via de novo pathway; 5-amino-1-(5-phospho-D-ribosyl)imidazole from N(2)-formyl-N(1)-(5-phospho-D-ribosyl)glycinamide: step 1/2. Phosphoribosylformylglycinamidine synthase involved in the purines biosynthetic pathway. Catalyzes the ATP-dependent conversion of formylglycinamide ribonucleotide (FGAR) and glutamine to yield formylglycinamidine ribonucleotide (FGAM) and glutamate. This chain is Phosphoribosylformylglycinamidine synthase, found in Pseudomonas syringae pv. tomato (strain ATCC BAA-871 / DC3000).